A 1252-amino-acid polypeptide reads, in one-letter code: ATP-dependent helicase/nuclease subunit A (1252 aa).

A UvrD-like helicase ATP-binding domain is found at Thr-6–Arg-489. Ala-27–Thr-34 is an ATP binding site. In terms of domain architecture, UvrD-like helicase C-terminal spans Ala-523–Gly-811.

Belongs to the helicase family. AddA subfamily. Heterodimer of AddA and AddB/RexB. The cofactor is Mg(2+).

It catalyses the reaction Couples ATP hydrolysis with the unwinding of duplex DNA by translocating in the 3'-5' direction.. The enzyme catalyses ATP + H2O = ADP + phosphate + H(+). In terms of biological role, the heterodimer acts as both an ATP-dependent DNA helicase and an ATP-dependent, dual-direction single-stranded exonuclease. Recognizes the chi site generating a DNA molecule suitable for the initiation of homologous recombination. The AddA nuclease domain is required for chi fragment generation; this subunit has the helicase and 3' -&gt; 5' nuclease activities. The protein is ATP-dependent helicase/nuclease subunit A of Clostridium acetobutylicum (strain ATCC 824 / DSM 792 / JCM 1419 / IAM 19013 / LMG 5710 / NBRC 13948 / NRRL B-527 / VKM B-1787 / 2291 / W).